Reading from the N-terminus, the 202-residue chain is MPPNLQRIFPALCLLGVLFLLHCTPVLCGCDNPPVVAHGHHTQIIGLFGMKKDEVVYKCDEGYTLVGEDRLSCRSSRWSPAAPQCKALCPKPQIDRGKLSVDQDEYIESENVIVQCGSGYGLVGPKIITCTEDGTWHPRVPKCEWEYPEDCEQVHEGKKLMQCLPNLEEIKLALELYKLSLETKLLELQIDKEKKAKAKYSI.

Positions 1–28 (MPPNLQRIFPALCLLGVLFLLHCTPVLC) are cleaved as a signal peptide. Sushi domains lie at 29-87 (GCDN…QCKA) and 88-145 (LCPK…KCEW). Cystine bridges form between C30–C73, C59–C85, C89–C130, and C116–C143.

As to quaternary structure, forms high molecular weight disulfide-linked complexes. In terms of tissue distribution, plasma. Found on very low-density lipoprotein (VLDL), on chylomicrons, and in the D &gt; 1.21 g/ml fraction of pig plasma. Found in liver, spleen, lung, bone marrow and lymph node.

It is found in the secreted. In terms of biological role, may be a lipoprotein-borne regulator of either the coagulation or the complement cascades. The chain is Apolipoprotein R (APOR) from Sus scrofa (Pig).